An 84-amino-acid polypeptide reads, in one-letter code: Small ribosomal subunit protein uS17 (84 aa).

This sequence belongs to the universal ribosomal protein uS17 family. Part of the 30S ribosomal subunit.

Functionally, one of the primary rRNA binding proteins, it binds specifically to the 5'-end of 16S ribosomal RNA. The sequence is that of Small ribosomal subunit protein uS17 from Aliivibrio salmonicida (strain LFI1238) (Vibrio salmonicida (strain LFI1238)).